We begin with the raw amino-acid sequence, 228 residues long: UPF0758 protein NT01CX_1687 (228 aa).

The MPN domain occupies Ile106–Leu228. Positions 177, 179, and 190 each coordinate Zn(2+). Residues His177–Asp190 carry the JAMM motif motif.

It belongs to the UPF0758 family.

The chain is UPF0758 protein NT01CX_1687 from Clostridium novyi (strain NT).